A 143-amino-acid chain; its full sequence is Small ribosomal subunit protein uS9 (143 aa).

A disordered region spans residues 124–143; it reads PEPKKFGGKGARARFQKSYR. A compositionally biased stretch (basic residues) spans 134–143; that stretch reads ARARFQKSYR.

This sequence belongs to the universal ribosomal protein uS9 family.

This chain is Small ribosomal subunit protein uS9 (RPS16), found in Candida glabrata (strain ATCC 2001 / BCRC 20586 / JCM 3761 / NBRC 0622 / NRRL Y-65 / CBS 138) (Yeast).